The sequence spans 214 residues: Mexicain (214 aa).

Disulfide bonds link C22–C63, C56–C95, and C153–C200. C25 is an active-site residue. Position 25 (C25) interacts with E64. Residues H159 and N175 contribute to the active site.

This sequence belongs to the peptidase C1 family. In terms of tissue distribution, expressed in latex.

The protein resides in the secreted. Functionally, cysteine protease. The protein is Mexicain of Jacaratia mexicana (Wild papaya).